The chain runs to 269 residues: GATA transcription factor 3 (269 aa).

The Nuclear localization signal signature appears at 136-143; it reads KPRTKRSR. The segment at 176 to 230 adopts a GATA-type zinc-finger fold; the sequence is LVFQRRCSHCGTNNTPQWRTGPVGPKTLCNACGVRFKSGRLCPEYRPADSPTFSN. A disordered region spans residues 245–269; the sequence is KSKELGEETGEASTKSDPVKFGSKW.

This sequence belongs to the type IV zinc-finger family. Class A subfamily. Mostly expressed in roots. Also expressed in stems, flowers and leaves.

It localises to the nucleus. In terms of biological role, transcriptional activator that specifically binds 5'-GATA-3' or 5'-GAT-3' motifs within gene promoters. May be involved in the regulation of some light-responsive genes. This is GATA transcription factor 3 (GATA3) from Arabidopsis thaliana (Mouse-ear cress).